The chain runs to 327 residues: Complex I intermediate-associated protein 30, mitochondrial (327 aa).

A mitochondrion-targeting transit peptide spans 1-24; that stretch reads MALVHKLLRDTYILRKFSKPTSAL. The interval 42–63 is disordered; it reads PVASPGKASSQRKTEGDLQGDH. Residues 53–63 are compositionally biased toward basic and acidic residues; it reads RKTEGDLQGDH. Residue S318 is modified to Phosphoserine.

Belongs to the CIA30 family. Part of the mitochondrial complex I assembly/MCIA complex that comprises at least the core subunits TMEM126B, NDUFAF1, ECSIT and ACAD9 and complement subunits such as COA1 and TMEM186. Interacts with ECSIT. Interacts with ACAD9. At early stages of complex I assembly, it is found in intermediate subcomplexes that contain different subunits including NDUFB6, NDUFA6, NDUFA9, NDUFS3, NDUFS7, ND1, ND2 and ND3. Interacts with TMEM70 and TMEM242.

It localises to the mitochondrion. Its subcellular location is the mitochondrion matrix. Its function is as follows. As part of the MCIA complex, involved in the assembly of the mitochondrial complex I. The polypeptide is Complex I intermediate-associated protein 30, mitochondrial (Gorilla gorilla gorilla (Western lowland gorilla)).